The chain runs to 219 residues: Glutathione S-transferase U19 (219 aa).

Residues 3–82 form the GST N-terminal domain; that stretch reads NEVILLDFWP…YIDEVWSHKN (80 aa). Glutathione contacts are provided by residues 13-14, 39-40, 53-54, and 66-67; these read SM, NK, KI, and ES. A GST C-terminal domain is found at 88 to 208; that stretch reads DPYLRAQARF…LPDPEKVTEF (121 aa). Ser198 carries the post-translational modification Phosphoserine.

Belongs to the GST superfamily. Tau family.

It is found in the cytoplasm. The protein resides in the cytosol. The enzyme catalyses RX + glutathione = an S-substituted glutathione + a halide anion + H(+). Functionally, catalyzes the glutathionylation of 12-oxophytodienoate (OPDA). In vitro, possesses glutathione S-transferase activity toward 1-chloro-2,4-dinitrobenzene (CDNB) and benzyl isothiocyanate (BITC), and glutathione peroxidase activity toward cumene hydroperoxide. This is Glutathione S-transferase U19 (GSTU19) from Arabidopsis thaliana (Mouse-ear cress).